A 1127-amino-acid polypeptide reads, in one-letter code: Testis-expressed protein 2 (1127 aa).

2 disordered regions span residues 1-27 and 133-279; these read MTSL…HVQR and AVSP…SFFK. The segment covering 133-187 has biased composition (low complexity); sequence AVSPGSSSSGPLASSPSVSSLSEQKTSSSSPLSSPSKSPILSSSASTSTLSSAKP. At S196 the chain carries Phosphoserine. A compositionally biased stretch (polar residues) spans 249–275; that stretch reads QFTQPRNTGGDSKTAPSSPLTSPSDTR. T262 carries the phosphothreonine modification. 4 positions are modified to phosphoserine: S265, S266, S270, and S295. N330 carries an N-linked (GlcNAc...) asparagine glycan. The disordered stretch occupies residues 348-386; it reads EEECDSEGDGYGSDSNIPRSDHPKSTGEPTREIELKSSQ. Residues 366-382 are compositionally biased toward basic and acidic residues; the sequence is RSDHPKSTGEPTREIEL. 2 helical membrane-spanning segments follow: residues 475 to 495 and 497 to 517; these read TLGF…PHYV and GLFL…WFFT. 4 disordered regions span residues 648–685, 715–764, 786–816, and 947–980; these read KAQT…QRDQ, KKSS…QKEL, QESR…PPSE, and DEES…GYVG. Positions 650–670 are enriched in basic and acidic residues; the sequence is QTDKETSEEKPPAEGSEDPKK. 7 positions are modified to phosphoserine: S732, S738, S744, S748, S751, S798, and S815. The span at 735–750 shows a compositional bias: polar residues; sequence NSPSGHLTHSRSSSKG. A compositionally biased stretch (polar residues) spans 787–804; it reads ESRSPQRSPLQSAESSPT. Residues 816–1101 enclose the SMP-LTD domain; that stretch reads EEEEQEAWVN…MPNMDDVYIT (286 aa). Residues 947–962 are compositionally biased toward acidic residues; that stretch reads DEESSSAGSSEEDDAP.

The protein localises to the endoplasmic reticulum membrane. It is found in the nucleus membrane. During endoplasmic reticulum (ER) stress or when cellular ceramide levels increase, may induce contacts between the ER and medial-Golgi complex to facilitate non-vesicular transport of ceramides from the ER to the Golgi complex where they are converted to complex sphingolipids, preventing toxic ceramide accumulation. The polypeptide is Testis-expressed protein 2 (TEX2) (Homo sapiens (Human)).